Consider the following 1435-residue polypeptide: Sterol 3-beta-glucosyltransferase (1435 aa).

Disordered regions lie at residues 1-26 (MAPD…HQVA), 75-107 (SDEE…KFEG), 123-169 (RFSS…KDTP), and 185-206 (PSFE…RTSP). Residues 85-99 (TRQSSESHINRSSID) are compositionally biased toward polar residues. Over residues 123-133 (RFSSRSKSKSS) the composition is skewed to low complexity. Over residues 134 to 143 (NTIARGSRTP) the composition is skewed to polar residues. Over residues 189-206 (MPRKSKDPAEVDDERTSP) the composition is skewed to basic and acidic residues. The 48-residue stretch at 211–258 (ERLMEIFKFETPEDVLEEYPCWLMKSVLLQGYMYITTKHICFYAYLPK) folds into the GRAM 1 domain. The PH domain maps to 262-360 (EVVKSGYLSK…WVKALQKIIF (99 aa)). Disordered stretches follow at residues 444–477 (LSTA…PNAP), 527–594 (DLNR…QASA), 610–671 (QHSP…QAEI), and 727–759 (GKKH…ATPA). Positions 527-537 (DLNRLTTEHHR) are enriched in basic and acidic residues. Composition is skewed to polar residues over residues 539–554 (NSAN…STNR), 628–647 (KSRS…TRTQ), and 657–671 (TTGS…QAEI). Positions 729-742 (KHYEEPHGIPRDNE) are enriched in basic and acidic residues. The GRAM 2 domain maps to 760–826 (DRFRDHFALP…KDIENVDKEK (67 aa)). Ser-949, Arg-950, Asp-952, Ala-1252, His-1254, His-1267, Gly-1271, Thr-1272, Asp-1291, and Gln-1292 together coordinate UDP-alpha-D-glucose.

This sequence belongs to the glycosyltransferase 28 family.

It is found in the cytoplasm. The protein resides in the preautophagosomal structure membrane. It carries out the reaction a sterol + UDP-alpha-D-glucose = a sterol 3-beta-D-glucoside + UDP + H(+). The catalysed reaction is ergosterol + UDP-alpha-D-glucose = ergosteryl 3-beta-D-glucoside + UDP + H(+). Functionally, sterol glycosyltransferase responsible for the glycosylation of ergosterol to form ergosterol-glucoside. This is Sterol 3-beta-glucosyltransferase from Sclerotinia sclerotiorum (strain ATCC 18683 / 1980 / Ss-1) (White mold).